The sequence spans 179 residues: uncharacterized protein (179 aa).

Residues 1 to 15 show a composition bias toward basic and acidic residues; sequence MQRQTGHMEDKKRTG. A disordered region spans residues 1–32; sequence MQRQTGHMEDKKRTGLESQGTENAFSDGRDGK.

This is an uncharacterized protein from Gallus gallus (Chicken).